Consider the following 101-residue polypeptide: Small ribosomal subunit protein bS18c (101 aa).

It belongs to the bacterial ribosomal protein bS18 family. Part of the 30S ribosomal subunit.

It is found in the plastid. The protein resides in the chloroplast. The polypeptide is Small ribosomal subunit protein bS18c (Coffea arabica (Arabian coffee)).